The sequence spans 343 residues: Cytosolic Fe-S cluster assembly factor CFD1 (343 aa).

An ATP-binding site is contributed by 15–22 (GKGGVGKS). Composition is skewed to polar residues over residues 80–91 (PSSDGLNGSQRA) and 99–110 (ESSSSTVETAPQ). A disordered region spans residues 80 to 110 (PSSDGLNGSQRANKPDDSNESSSSTVETAPQ). Residues Cys241 and Cys244 each contribute to the [4Fe-4S] cluster site.

It belongs to the Mrp/NBP35 ATP-binding proteins family. NUBP2/CFD1 subfamily. Heterotetramer of 2 NBP35 and 2 CFD1 chains. It depends on [4Fe-4S] cluster as a cofactor.

Its subcellular location is the cytoplasm. Functionally, component of the cytosolic iron-sulfur (Fe/S) protein assembly (CIA) machinery. Required for maturation of extramitochondrial Fe-S proteins. The NBP35-CFD1 heterotetramer forms a Fe-S scaffold complex, mediating the de novo assembly of an Fe-S cluster and its transfer to target apoproteins. In Coccidioides immitis (strain RS) (Valley fever fungus), this protein is Cytosolic Fe-S cluster assembly factor CFD1.